Here is a 360-residue protein sequence, read N- to C-terminus: Protein NDRG2 (360 aa).

The disordered stretch occupies residues 325-360 (RTASLSSEGNRSRSRTLSQSSESGGGPPAPLAEVTC).

Belongs to the NDRG family.

It localises to the cytoplasm. Its function is as follows. Contributes to the regulation of the Wnt signaling pathway. Down-regulates CTNNB1-mediated transcriptional activation of target genes. May be involved in neuron differentiation. This chain is Protein NDRG2, found in Xenopus tropicalis (Western clawed frog).